Reading from the N-terminus, the 150-residue chain is Ribonuclease K6 (150 aa).

The first 23 residues, 1 to 23 (MVLCFPLLLLLLVLWGPVCPLHA), serve as a signal peptide directing secretion. The Proton acceptor role is filled by His38. Intrachain disulfides connect Cys46-Cys104, Cys60-Cys114, Cys78-Cys129, and Cys85-Cys92. The N-linked (GlcNAc...) asparagine glycan is linked to Asn55. Residues 61-65 (KHQNT) and Lys86 contribute to the substrate site. Asn100 is a glycosylation site (N-linked (GlcNAc...) asparagine). Arg105 serves as a coordination point for substrate. The Proton donor role is filled by His145.

The protein belongs to the pancreatic ribonuclease family. In terms of assembly, interacts (via N-terminus) with bacterial lipopolysaccharide (LPS).

It localises to the secreted. Its subcellular location is the lysosome. It is found in the cytoplasmic granule. Its function is as follows. Ribonuclease which shows a preference for the pyrimidines uridine and cytosine. Has potent antibacterial activity against a range of Gram-positive and Gram-negative bacteria, including P.aeruginosa, A.baumanii, M.luteus, S.aureus, E.faecalis, E.faecium, S.saprophyticus and E.coli. Causes loss of bacterial membrane integrity, and also promotes agglutination of Gram-negative bacteria. Probably contributes to urinary tract sterility. Bactericidal activity is independent of RNase activity. This Gorilla gorilla gorilla (Western lowland gorilla) protein is Ribonuclease K6 (RNASE6).